A 256-amino-acid chain; its full sequence is Thiazole synthase (256 aa).

The active-site Schiff-base intermediate with DXP is the K95. 1-deoxy-D-xylulose 5-phosphate-binding positions include G156, 182 to 183, and 204 to 205; these read AG and NT.

This sequence belongs to the ThiG family. In terms of assembly, homotetramer. Forms heterodimers with either ThiH or ThiS.

Its subcellular location is the cytoplasm. The catalysed reaction is [ThiS sulfur-carrier protein]-C-terminal-Gly-aminoethanethioate + 2-iminoacetate + 1-deoxy-D-xylulose 5-phosphate = [ThiS sulfur-carrier protein]-C-terminal Gly-Gly + 2-[(2R,5Z)-2-carboxy-4-methylthiazol-5(2H)-ylidene]ethyl phosphate + 2 H2O + H(+). Its pathway is cofactor biosynthesis; thiamine diphosphate biosynthesis. In terms of biological role, catalyzes the rearrangement of 1-deoxy-D-xylulose 5-phosphate (DXP) to produce the thiazole phosphate moiety of thiamine. Sulfur is provided by the thiocarboxylate moiety of the carrier protein ThiS. In vitro, sulfur can be provided by H(2)S. The polypeptide is Thiazole synthase (Alteromonas mediterranea (strain DSM 17117 / CIP 110805 / LMG 28347 / Deep ecotype)).